Consider the following 126-residue polypeptide: Large-conductance mechanosensitive channel (126 aa).

2 consecutive transmembrane segments (helical) span residues 14 to 34 and 69 to 89; these read VLDL…VKSL and GAFL…FLLV.

Belongs to the MscL family. As to quaternary structure, homopentamer.

It is found in the cell membrane. Its function is as follows. Channel that opens in response to stretch forces in the membrane lipid bilayer. May participate in the regulation of osmotic pressure changes within the cell. The chain is Large-conductance mechanosensitive channel from Leuconostoc citreum (strain KM20).